A 530-amino-acid chain; its full sequence is UDP-glucuronosyltransferase 2B17 (530 aa).

The signal sequence occupies residues 1 to 23 (MPGKWISALLLLQISCCFQSGNC). The chain crosses the membrane as a helical span at residues 494 to 510 (VIGFLLTCSAVIAVLTV).

This sequence belongs to the UDP-glycosyltransferase family.

It localises to the endoplasmic reticulum membrane. It catalyses the reaction glucuronate acceptor + UDP-alpha-D-glucuronate = acceptor beta-D-glucuronoside + UDP + H(+). It carries out the reaction 17alpha-estradiol + UDP-alpha-D-glucuronate = 17alpha-estradiol 3-O-(beta-D-glucuronate) + UDP + H(+). The catalysed reaction is 17alpha-estradiol + UDP-alpha-D-glucuronate = 17alpha-estradiol 17-O-(beta-D-glucuronate) + UDP + H(+). The enzyme catalyses 17beta-estradiol + UDP-alpha-D-glucuronate = 17beta-estradiol 17-O-(beta-D-glucuronate) + UDP + H(+). It catalyses the reaction 17beta-hydroxy-5alpha-androstan-3-one + UDP-alpha-D-glucuronate = 5alpha-dihydrotestosterone 17-O-(beta-D-glucuronate) + UDP + H(+). It carries out the reaction testosterone + UDP-alpha-D-glucuronate = testosterone 17-O-(beta-D-glucuronate) + UDP + H(+). UDP-glucuronosyltransferase (UGT) that catalyzes phase II biotransformation reactions in which lipophilic substrates are conjugated with glucuronic acid to increase the metabolite's water solubility, thereby facilitating excretion into either the urine or bile. Catalyzes the glucuronidation of endogenous steroid hormones such as androgens (epitestosterone, androsterone) and estrogens (estradiol, epiestradiol). This chain is UDP-glucuronosyltransferase 2B17, found in Rattus norvegicus (Rat).